The primary structure comprises 215 residues: Nascent polypeptide-associated complex subunit alpha (215 aa).

Residues 1-81 (MPGEATDTVP…SEKKARKAMS (81 aa)) are disordered. Over residues 9–28 (VPATEQELPQPQAETGSGTE) the composition is skewed to polar residues. Acidic residues predominate over residues 29–42 (SDSDESVPELEEQD). S43 is subject to Phosphoserine; by ILK1. A compositionally biased stretch (low complexity) spans 44–57 (TQATTQQAQLAAAA). Residues 69-80 (QSRSEKKARKAM) form a required for DNA-binding region. One can recognise an NAC-A/B domain in the interval 70–135 (SRSEKKARKA…AKIEDLSQQA (66 aa)). Residues 93-108 (RVTIRKSKNILFVITK) are RNA/DNA-binding. Residue S132 is modified to Phosphoserine. Position 142 is an N6-acetyllysine; alternate (K142). K142 is covalently cross-linked (Glycyl lysine isopeptide (Lys-Gly) (interchain with G-Cter in SUMO2); alternate). T159 carries the post-translational modification Phosphothreonine; by GSK3-beta. T161 is subject to Phosphothreonine. Phosphoserine occurs at positions 166, 186, 191, and 203. The UBA domain maps to 176–213 (VEVKDIELVMSQANVSRAKAVRALKNNSNDIVNAIMEL).

This sequence belongs to the NAC-alpha family. In terms of assembly, part of the nascent polypeptide-associated complex (NAC), which is a heterodimer of NACA and BTF3 (via NAC-A/B domains). NAC associates with ribosomes through the BTF3/NACB subunit and contacts the ribosomal protein L23, which is positioned near the exiting site. Both subunits can contact nascent polypeptide chains. NACA may also form homodimers, and only this form binds DNA. Interacts with TBP and JUN. Post-translationally, phosphorylation of Ser-43 by ILK during cell adhesion may promote nuclear localization. Phosphorylation of Thr-159 by GSK3B may promote proteasome mediated degradation.

The protein resides in the cytoplasm. It is found in the nucleus. Its function is as follows. Prevents inappropriate targeting of non-secretory polypeptides to the endoplasmic reticulum (ER). Binds to nascent polypeptide chains as they emerge from the ribosome and blocks their interaction with the signal recognition particle (SRP), which normally targets nascent secretory peptides to the ER. Also reduces the inherent affinity of ribosomes for protein translocation sites in the ER membrane (M sites). May act as a specific coactivator for JUN, binding to DNA and stabilizing the interaction of JUN homodimers with target gene promoters. The sequence is that of Nascent polypeptide-associated complex subunit alpha (NACA) from Bos taurus (Bovine).